Here is a 906-residue protein sequence, read N- to C-terminus: MLSLVQKIIGSRNERFIKKVSRIVQKINSLEPEFEKLSDEQLKAKTFEYRERLANGEILDNLLPEAFATVREAGKRTKNMRHYDVQLIGGIVLHQGKVAEMRTGEGKTLVATLPAYLNALTGDGVHVITVNDYLAKRDAELMSDIYEFLGMSVGVIVADLNPQQRKEAYACDITYGTNNEFGFDYLRDNMAYEKEQQVQRSRNYVIIDEVDSILIDEARTPLIISGASDDSSEMYNLFNRLVPYLEKQEKEEVENEQEQRDFYVDEKSKNAYLTEKGYAKIENMLKKEGILEEDDNLYSPHNITKMHYLNACLRAHSLYQLNIDYIVRDQEIVIIDESTGRAMPGRRWSDGLHQAIEAKEGVKINAENQTMASITFQNFFKLYNKIAGMTGTADTEAFELHSIYGLEVIIIPTNKPMIRKDHHDEIYGSVREKFDAIVEDIKERISKGQPVLVGTASIEASEVLSTLLKKKKIRHNVLNAKQHEKEASIIAMAGYPGNVTIATNMAGRGTDIILGGNLEVEIAQLEDPTPEDIAQIKAEWLKRNEAVKKAGGLCIIGSERHDSRRIDNQLRGRAARQGDPGESKFYLSMDDNLLRIFASQSMAERVKKGLKGGESLAFGFMSKVISKAQGKVESYHFDIRKNLLEYDNVVNTQRKVIYEQRQSFLEAEDVSDILADIRIDVAEQLFHDYVPAGSMHELWDLEGLEKALKSDFMIELDLQKLYQEDDSLGEEDLKKLVREAIEIEFVEKTKNLDSGAVRQFEKFSLLQSLDTHWREHLSSIDHLRNSINLRGYAQKDPKNEYKKEAFELFSTMLDNFKYEVISSLAKIRIATEEETQRAQQEWQESMSDIKAEHESVIDNNQRHDEDEQEETPKVQQVRREGPKVKRNDPCPCGSGKKYKQCHGKVE.

ATP contacts are provided by residues Gln-86, 104–108 (GEGKT), and Asp-511. Composition is skewed to basic and acidic residues over residues 853-865 (HESVIDNNQRHDE) and 877-888 (VRREGPKVKRND). The disordered stretch occupies residues 853–906 (HESVIDNNQRHDEDEQEETPKVQQVRREGPKVKRNDPCPCGSGKKYKQCHGKVE). Zn(2+) contacts are provided by Cys-890, Cys-892, Cys-901, and His-902. Positions 896–906 (KKYKQCHGKVE) are enriched in basic residues.

Belongs to the SecA family. As to quaternary structure, monomer and homodimer. Part of the essential Sec protein translocation apparatus which comprises SecA, SecYEG and auxiliary proteins SecDF-YajC and YidC. Zn(2+) serves as cofactor.

It is found in the cell inner membrane. Its subcellular location is the cytoplasm. It catalyses the reaction ATP + H2O + cellular proteinSide 1 = ADP + phosphate + cellular proteinSide 2.. Functionally, part of the Sec protein translocase complex. Interacts with the SecYEG preprotein conducting channel. Has a central role in coupling the hydrolysis of ATP to the transfer of proteins into and across the cell membrane, serving both as a receptor for the preprotein-SecB complex and as an ATP-driven molecular motor driving the stepwise translocation of polypeptide chains across the membrane. This is Protein translocase subunit SecA from Francisella tularensis subsp. novicida (strain U112).